The chain runs to 92 residues: MGLKQVQLFVRGRVQGVFFRASTQREAKRLGLTGWVKNRSDGSVEVLAEGEEDELKELIAWANRGPSAARVERVDVRWRGFSGDFFDFRITD.

The 88-residue stretch at Q5–D92 folds into the Acylphosphatase-like domain. Catalysis depends on residues R20 and N38.

Belongs to the acylphosphatase family.

It catalyses the reaction an acyl phosphate + H2O = a carboxylate + phosphate + H(+). The sequence is that of Acylphosphatase (acyP) from Sorangium cellulosum (strain So ce56) (Polyangium cellulosum (strain So ce56)).